The chain runs to 159 residues: D-aminoacyl-tRNA deacylase (159 aa).

Positions 142 to 143 (GP) match the Gly-cisPro motif, important for rejection of L-amino acids motif.

The protein belongs to the DTD family. Homodimer.

The protein localises to the cytoplasm. The enzyme catalyses glycyl-tRNA(Ala) + H2O = tRNA(Ala) + glycine + H(+). It catalyses the reaction a D-aminoacyl-tRNA + H2O = a tRNA + a D-alpha-amino acid + H(+). In terms of biological role, an aminoacyl-tRNA editing enzyme that deacylates mischarged D-aminoacyl-tRNAs. Also deacylates mischarged glycyl-tRNA(Ala), protecting cells against glycine mischarging by AlaRS. Acts via tRNA-based rather than protein-based catalysis; rejects L-amino acids rather than detecting D-amino acids in the active site. By recycling D-aminoacyl-tRNA to D-amino acids and free tRNA molecules, this enzyme counteracts the toxicity associated with the formation of D-aminoacyl-tRNA entities in vivo and helps enforce protein L-homochirality. This chain is D-aminoacyl-tRNA deacylase, found in Albidiferax ferrireducens (strain ATCC BAA-621 / DSM 15236 / T118) (Rhodoferax ferrireducens).